The primary structure comprises 243 residues: Pyridoxine 5'-phosphate synthase (243 aa).

3-amino-2-oxopropyl phosphate is bound at residue Asn7. 9–10 (DH) lines the 1-deoxy-D-xylulose 5-phosphate pocket. 3-amino-2-oxopropyl phosphate is bound at residue Arg18. His43 serves as the catalytic Proton acceptor. 2 residues coordinate 1-deoxy-D-xylulose 5-phosphate: Arg45 and His50. Residue Glu70 is the Proton acceptor of the active site. 1-deoxy-D-xylulose 5-phosphate is bound at residue Thr100. His192 (proton donor) is an active-site residue. 3-amino-2-oxopropyl phosphate-binding positions include Gly193 and 215–216 (GF).

Belongs to the PNP synthase family. In terms of assembly, homooctamer; tetramer of dimers.

It is found in the cytoplasm. The catalysed reaction is 3-amino-2-oxopropyl phosphate + 1-deoxy-D-xylulose 5-phosphate = pyridoxine 5'-phosphate + phosphate + 2 H2O + H(+). It participates in cofactor biosynthesis; pyridoxine 5'-phosphate biosynthesis; pyridoxine 5'-phosphate from D-erythrose 4-phosphate: step 5/5. In terms of biological role, catalyzes the complicated ring closure reaction between the two acyclic compounds 1-deoxy-D-xylulose-5-phosphate (DXP) and 3-amino-2-oxopropyl phosphate (1-amino-acetone-3-phosphate or AAP) to form pyridoxine 5'-phosphate (PNP) and inorganic phosphate. This is Pyridoxine 5'-phosphate synthase from Salinibacter ruber (strain DSM 13855 / M31).